The sequence spans 616 residues: Proline--tRNA ligase (616 aa).

It belongs to the class-II aminoacyl-tRNA synthetase family. ProS type 1 subfamily. As to quaternary structure, homodimer.

It is found in the cytoplasm. The enzyme catalyses tRNA(Pro) + L-proline + ATP = L-prolyl-tRNA(Pro) + AMP + diphosphate. Functionally, catalyzes the attachment of proline to tRNA(Pro) in a two-step reaction: proline is first activated by ATP to form Pro-AMP and then transferred to the acceptor end of tRNA(Pro). As ProRS can inadvertently accommodate and process non-cognate amino acids such as alanine and cysteine, to avoid such errors it has two additional distinct editing activities against alanine. One activity is designated as 'pretransfer' editing and involves the tRNA(Pro)-independent hydrolysis of activated Ala-AMP. The other activity is designated 'posttransfer' editing and involves deacylation of mischarged Ala-tRNA(Pro). The misacylated Cys-tRNA(Pro) is not edited by ProRS. The sequence is that of Proline--tRNA ligase from Streptococcus gordonii (strain Challis / ATCC 35105 / BCRC 15272 / CH1 / DL1 / V288).